The primary structure comprises 86 residues: ATP synthase subunit c (86 aa).

Transmembrane regions (helical) follow at residues 13-33 and 63-83; these read FFAT…AGLA and ILGQ…AFIL.

This sequence belongs to the ATPase C chain family. In terms of assembly, F-type ATPases have 2 components, F(1) - the catalytic core - and F(0) - the membrane proton channel. F(1) has five subunits: alpha(3), beta(3), gamma(1), delta(1), epsilon(1). F(0) has three main subunits: a(1), b(2) and c(10-14). The alpha and beta chains form an alternating ring which encloses part of the gamma chain. F(1) is attached to F(0) by a central stalk formed by the gamma and epsilon chains, while a peripheral stalk is formed by the delta and b chains.

Its subcellular location is the cell membrane. F(1)F(0) ATP synthase produces ATP from ADP in the presence of a proton or sodium gradient. F-type ATPases consist of two structural domains, F(1) containing the extramembraneous catalytic core and F(0) containing the membrane proton channel, linked together by a central stalk and a peripheral stalk. During catalysis, ATP synthesis in the catalytic domain of F(1) is coupled via a rotary mechanism of the central stalk subunits to proton translocation. Functionally, key component of the F(0) channel; it plays a direct role in translocation across the membrane. A homomeric c-ring of between 10-14 subunits forms the central stalk rotor element with the F(1) delta and epsilon subunits. This chain is ATP synthase subunit c, found in Acholeplasma laidlawii (strain PG-8A).